The chain runs to 267 residues: Acyl-[acyl-carrier-protein]--UDP-N-acetylglucosamine O-acyltransferase (267 aa).

It belongs to the transferase hexapeptide repeat family. LpxA subfamily. In terms of assembly, homotrimer.

Its subcellular location is the cytoplasm. It catalyses the reaction a (3R)-hydroxyacyl-[ACP] + UDP-N-acetyl-alpha-D-glucosamine = a UDP-3-O-[(3R)-3-hydroxyacyl]-N-acetyl-alpha-D-glucosamine + holo-[ACP]. The protein operates within glycolipid biosynthesis; lipid IV(A) biosynthesis; lipid IV(A) from (3R)-3-hydroxytetradecanoyl-[acyl-carrier-protein] and UDP-N-acetyl-alpha-D-glucosamine: step 1/6. Its function is as follows. Involved in the biosynthesis of lipid A, a phosphorylated glycolipid that anchors the lipopolysaccharide to the outer membrane of the cell. This is Acyl-[acyl-carrier-protein]--UDP-N-acetylglucosamine O-acyltransferase from Cupriavidus metallidurans (strain ATCC 43123 / DSM 2839 / NBRC 102507 / CH34) (Ralstonia metallidurans).